The primary structure comprises 309 residues: Aspartate carbamoyltransferase catalytic subunit (309 aa).

Positions 57 and 58 each coordinate carbamoyl phosphate. K86 contributes to the L-aspartate binding site. Carbamoyl phosphate contacts are provided by R107, H135, and Q138. The L-aspartate site is built by R168 and R228. Positions 267 and 268 each coordinate carbamoyl phosphate.

It belongs to the aspartate/ornithine carbamoyltransferase superfamily. ATCase family. Heterooligomer of catalytic and regulatory chains.

The enzyme catalyses carbamoyl phosphate + L-aspartate = N-carbamoyl-L-aspartate + phosphate + H(+). The protein operates within pyrimidine metabolism; UMP biosynthesis via de novo pathway; (S)-dihydroorotate from bicarbonate: step 2/3. Catalyzes the condensation of carbamoyl phosphate and aspartate to form carbamoyl aspartate and inorganic phosphate, the committed step in the de novo pyrimidine nucleotide biosynthesis pathway. The sequence is that of Aspartate carbamoyltransferase catalytic subunit from Nitrosopumilus maritimus (strain SCM1).